The chain runs to 837 residues: Granulocyte colony-stimulating factor receptor (837 aa).

The first 25 residues, 1–25 (MVGLGACTLTGVTLIFLLLPRSLES), serve as a signal peptide directing secretion. 2 cysteine pairs are disulfide-bonded: cysteine 26–cysteine 52 and cysteine 46–cysteine 102. The region spanning 26 to 118 (CGHIEISPPV…SVQLLDQAEL (93 aa)) is the Ig-like C2-type domain. Residues 26-626 (CGHIEISPPV…LTLRTLDPSD (601 aa)) are Extracellular-facing. Residues asparagine 51, asparagine 94, and asparagine 129 are each glycosylated (N-linked (GlcNAc...) asparagine). 5 consecutive Fibronectin type-III domains span residues 126–231 (SPSN…LEPP), 236–331 (LDIG…LRPT), 334–433 (APTI…NEGP), 434–529 (AVTG…GERA), and 530–624 (PPHA…TLDP). 5 disulfides stabilise this stretch: cysteine 132/cysteine 143, cysteine 168/cysteine 219, cysteine 178/cysteine 187, cysteine 249/cysteine 296, and cysteine 267/cysteine 310. Residues asparagine 186 and asparagine 279 are each glycosylated (N-linked (GlcNAc...) asparagine). Positions 319–323 (WSPWS) match the WSXWS motif motif. Asparagine 392, asparagine 408, asparagine 474, asparagine 487, asparagine 582, and asparagine 613 each carry an N-linked (GlcNAc...) asparagine glycan. The helical transmembrane segment at 627-650 (LNIFLGILCLVLLSTTCVVTWLCC) threads the bilayer. The Cytoplasmic portion of the chain corresponds to 651-837 (KRRGKTSFWS…VHGVEEQGGF (187 aa)). The short motif at 658–666 (FWSDVPDPA) is the Box 1 motif element.

This sequence belongs to the type I cytokine receptor family. Type 2 subfamily. As to quaternary structure, homodimer. The dimeric receptor binds two CSF3 molecules. Interacts with CEACAM1; down-regulates the CSF3R-STAT3 pathway through recruitment of PTPN6 that dephosphorylates CSF3R. Post-translationally, N-glycosylated. In terms of tissue distribution, found in bone marrow.

It localises to the membrane. Receptor for granulocyte colony-stimulating factor (CSF3). In addition it may function in some adhesion or recognition events at the cell surface. The sequence is that of Granulocyte colony-stimulating factor receptor (Csf3r) from Mus musculus (Mouse).